The sequence spans 164 residues: HTH-type transcriptional regulator IscR (164 aa).

The HTH rrf2-type domain occupies arginine 2 to asparagine 131. Residues leucine 28–lysine 51 constitute a DNA-binding region (H-T-H motif). [2Fe-2S] cluster-binding residues include cysteine 92, cysteine 98, and cysteine 104. Residues arginine 141 to proline 164 form a disordered region. The segment covering alanine 154–proline 164 has biased composition (polar residues).

The cofactor is [2Fe-2S] cluster.

Functionally, regulates the transcription of several operons and genes involved in the biogenesis of Fe-S clusters and Fe-S-containing proteins. In Photorhabdus laumondii subsp. laumondii (strain DSM 15139 / CIP 105565 / TT01) (Photorhabdus luminescens subsp. laumondii), this protein is HTH-type transcriptional regulator IscR.